The following is a 326-amino-acid chain: MNMEEIVALSVKHNVSDLHLCSAWPARWRIRGRMEAAPFDTPDVEELLREWLDDDQRAILLENGQLDFAVSLAENQRLRGSAFAQRHGISLALRLLPSHCPQLEQLGAPTVLPELLKSENGLILVTGATGSGKSTTLAAMVGYLNQHADAHILTLEDPVEYLYASQRCLIQQREIGLHCMTFASGLRAALREDPDVILLGELRDSETIRLALTAAETGHLVLATLHTRGAAQAVERLVDSFPAQEKDPVRNQLAGSLRAVLSQKLEVDKQEGRVALFELLINTPAVGNLIREGKTHQLPHVIQTGQQVGMITFQQSYQHRVGEGRL.

127–134 (GATGSGKS) lines the ATP pocket.

It belongs to the GSP E family.

This is an uncharacterized protein from Escherichia coli (strain K12).